A 358-amino-acid polypeptide reads, in one-letter code: Phospho-N-acetylmuramoyl-pentapeptide-transferase (358 aa).

The next 10 membrane-spanning stretches (helical) occupy residues 26-46 (TIYAMITALIVCFVLGPWIIR), 71-91 (TPTMGGLIILTAIILPTLLWA), 93-113 (LTNVYIWLTLFIIVGYGLIGF), 134-154 (MFWQVLLAGGVAVFLYVTPGF), 170-190 (LGIFFIPFVTLVIVGASNAVN), 197-217 (GLAIGPVAINAATYMLFAYVA), 234-254 (AGELAVICGAMVGAGLGFLWF), 261-281 (VFMGDVGSLSLGGTLGVIAVL), 286-306 (ILLVIVGGIFVIEALSVIFQV), and 335-355 (KIIVRFWIITIILALVAISTL).

Belongs to the glycosyltransferase 4 family. MraY subfamily. The cofactor is Mg(2+).

Its subcellular location is the cell inner membrane. It carries out the reaction UDP-N-acetyl-alpha-D-muramoyl-L-alanyl-gamma-D-glutamyl-meso-2,6-diaminopimeloyl-D-alanyl-D-alanine + di-trans,octa-cis-undecaprenyl phosphate = di-trans,octa-cis-undecaprenyl diphospho-N-acetyl-alpha-D-muramoyl-L-alanyl-D-glutamyl-meso-2,6-diaminopimeloyl-D-alanyl-D-alanine + UMP. The protein operates within cell wall biogenesis; peptidoglycan biosynthesis. Functionally, catalyzes the initial step of the lipid cycle reactions in the biosynthesis of the cell wall peptidoglycan: transfers peptidoglycan precursor phospho-MurNAc-pentapeptide from UDP-MurNAc-pentapeptide onto the lipid carrier undecaprenyl phosphate, yielding undecaprenyl-pyrophosphoryl-MurNAc-pentapeptide, known as lipid I. The chain is Phospho-N-acetylmuramoyl-pentapeptide-transferase from Trichlorobacter lovleyi (strain ATCC BAA-1151 / DSM 17278 / SZ) (Geobacter lovleyi).